Reading from the N-terminus, the 322-residue chain is Protein SEC13 homolog (322 aa).

The residue at position 2 (V2) is an N-acetylvaline. WD repeat units follow at residues 11-50 (SHED…QILI), 55-96 (GHEG…WEKS), 101-144 (GHDS…EVKK), 148-204 (AHTI…QWKE), 210-253 (AHSD…SNTW), and 260-299 (KFND…QWVC). Position 184 is a phosphoserine (S184). S309 carries the phosphoserine modification.

It belongs to the WD repeat SEC13 family. At the nuclear pore: component of the Y-shaped Nup107-160 subcomplex of the nuclear pore complex (NPC). The Nup107-160 subcomplex includes NUP160, NUP133, NUP107, NUP98, NUP85, NUP43, NUP37, SEH1 and SEC13. At the COPII coat complex: interacts with SEC31A and SEC31B. Interacts with SEC16A. Interacts with SEC16B. Component of the GATOR2 subcomplex, composed of MIOS, SEC13, SEH1L, WDR24 and WDR59. The GATOR2 complex interacts with CASTOR1 and CASTOR2; the interaction is negatively regulated by arginine. The GATOR2 complex interacts with SESN1, SESN2 and SESN3; the interaction is negatively regulated by amino acids.

It is found in the cytoplasmic vesicle. Its subcellular location is the COPII-coated vesicle membrane. The protein localises to the endoplasmic reticulum membrane. The protein resides in the nucleus. It localises to the nuclear pore complex. It is found in the lysosome membrane. With respect to regulation, the GATOR2 complex is negatively regulated by the upstream amino acid sensors CASTOR1 and SESN2, which sequester the GATOR2 complex in absence of amino acids. In the presence of abundant amino acids, GATOR2 is released from CASTOR1 and SESN2 and activated. In terms of biological role, functions as a component of the nuclear pore complex (NPC) and the COPII coat. At the endoplasmic reticulum, SEC13 is involved in the biogenesis of COPII-coated vesicles. Required for the exit of adipsin (CFD/ADN), an adipocyte-secreted protein from the endoplasmic reticulum. Functionally, as a component of the GATOR2 complex, functions as an activator of the amino acid-sensing branch of the mTORC1 signaling pathway. The GATOR2 complex indirectly activates mTORC1 through the inhibition of the GATOR1 subcomplex. GATOR2 probably acts as an E3 ubiquitin-protein ligase toward GATOR1. In the presence of abundant amino acids, the GATOR2 complex mediates ubiquitination of the NPRL2 core component of the GATOR1 complex, leading to GATOR1 inactivation. In the absence of amino acids, GATOR2 is inhibited, activating the GATOR1 complex. Within the GATOR2 complex, SEC13 and SEH1L are required to stabilize the complex. This chain is Protein SEC13 homolog, found in Homo sapiens (Human).